The sequence spans 304 residues: 4-diphosphocytidyl-2-C-methyl-D-erythritol kinase (304 aa).

Residue Lys18 is part of the active site. 103–113 (PVAAGIGGGSA) is a binding site for ATP. The active site involves Asp145.

Belongs to the GHMP kinase family. IspE subfamily.

It carries out the reaction 4-CDP-2-C-methyl-D-erythritol + ATP = 4-CDP-2-C-methyl-D-erythritol 2-phosphate + ADP + H(+). It participates in isoprenoid biosynthesis; isopentenyl diphosphate biosynthesis via DXP pathway; isopentenyl diphosphate from 1-deoxy-D-xylulose 5-phosphate: step 3/6. Its function is as follows. Catalyzes the phosphorylation of the position 2 hydroxy group of 4-diphosphocytidyl-2C-methyl-D-erythritol. This chain is 4-diphosphocytidyl-2-C-methyl-D-erythritol kinase, found in Rhodospirillum rubrum (strain ATCC 11170 / ATH 1.1.1 / DSM 467 / LMG 4362 / NCIMB 8255 / S1).